The sequence spans 113 residues: Small ribosomal subunit protein bS6 (113 aa).

This sequence belongs to the bacterial ribosomal protein bS6 family.

Functionally, binds together with bS18 to 16S ribosomal RNA. This Synechocystis sp. (strain ATCC 27184 / PCC 6803 / Kazusa) protein is Small ribosomal subunit protein bS6 (rpsF).